Here is an 879-residue protein sequence, read N- to C-terminus: Metabotropic glutamate receptor 3 (879 aa).

The first 24 residues, 1–24 (MKMLTRLQVLTLALFSKGFLLSLG), serve as a signal peptide directing secretion. Residues 25–577 (DHNFLRREIK…DYIRWEDAWA (553 aa)) lie on the Extracellular side of the membrane. Cys-57 and Cys-99 form a disulfide bridge. L-glutamate-binding positions include Ser-151 and 172 to 174 (AST). Asn-209 carries an N-linked (GlcNAc...) asparagine glycan. Tyr-222 is an L-glutamate binding site. Intrachain disulfides connect Cys-240–Cys-527, Cys-361–Cys-373, Cys-412–Cys-419, Cys-509–Cys-528, Cys-513–Cys-531, Cys-534–Cys-546, and Cys-549–Cys-562. Residue Asn-292 is glycosylated (N-linked (GlcNAc...) asparagine). Position 301 (Asp-301) interacts with L-glutamate. Lys-389 lines the L-glutamate pocket. Residues Asn-414 and Asn-439 are each glycosylated (N-linked (GlcNAc...) asparagine). The chain crosses the membrane as a helical span at residues 578–598 (IGPVTIACLGFMCTCMVITVF). Residues 599-613 (IKHNNTPLVKASGRE) are Cytoplasmic-facing. The helical transmembrane segment at 614–634 (LCYILLFGVGLSYCMTFFFIA) threads the bilayer. The Extracellular segment spans residues 635-688 (KPSPVICALRRLGLGSSFAICYSALLTKTNCIARIFDGVKNGAQRPKFISPSSQ). A helical transmembrane segment spans residues 689–709 (VFICLGLILVQIVMVSVWLIL). Residues 710 to 735 (EAPGTRRYTLAEKRETVILKCNVKDS) lie on the Cytoplasmic side of the membrane. A helical membrane pass occupies residues 736 to 756 (SMLISLTYDVILVILCTVYAF). The Extracellular segment spans residues 757–769 (KTRKCPENFNEAK). Residues 770 to 790 (FIGFTMYTTCIIWLAFLPIFY) form a helical membrane-spanning segment. At 791 to 807 (VTSSDYRVQTTTMCISV) the chain is on the cytoplasmic side. Residues 808–828 (SLSGFVVLGCLFAPKVHIILF) form a helical membrane-spanning segment. Topologically, residues 829-879 (QPQKNVVTHRLHLNRFSVSGTGTTYSQSSASMYVPTVCNGREVLDSTTSSL) are extracellular.

The protein belongs to the G-protein coupled receptor 3 family. As to quaternary structure, interacts with TAMALIN.

It is found in the cell membrane. In terms of biological role, G-protein coupled receptor for glutamate. Ligand binding causes a conformation change that triggers signaling via guanine nucleotide-binding proteins (G proteins) and modulates the activity of down-stream effectors. Signaling inhibits adenylate cyclase activity. This is Metabotropic glutamate receptor 3 (GRM3) from Macaca fascicularis (Crab-eating macaque).